Reading from the N-terminus, the 344-residue chain is Ferrochelatase (344 aa).

Fe cation contacts are provided by His-214 and Glu-295.

It belongs to the ferrochelatase family.

The protein resides in the cytoplasm. The enzyme catalyses heme b + 2 H(+) = protoporphyrin IX + Fe(2+). Its pathway is porphyrin-containing compound metabolism; protoheme biosynthesis; protoheme from protoporphyrin-IX: step 1/1. Functionally, catalyzes the ferrous insertion into protoporphyrin IX. This is Ferrochelatase from Rhizobium etli (strain ATCC 51251 / DSM 11541 / JCM 21823 / NBRC 15573 / CFN 42).